A 187-amino-acid chain; its full sequence is UPF0232 protein Mb0004 (187 aa).

2 stretches are compositionally biased toward basic and acidic residues: residues 1–17 and 35–45; these read MTGSVDRPDQNRGERLM and AARARGQDAGR. 3 disordered regions span residues 1–23, 35–75, and 168–187; these read MTGSVDRPDQNRGERLMKSPGLD, AARA…DPQP, and PSWRKGPRHIAGRGPRDTYG.

Belongs to the UPF0232 family.

In Mycobacterium bovis (strain ATCC BAA-935 / AF2122/97), this protein is UPF0232 protein Mb0004.